We begin with the raw amino-acid sequence, 237 residues long: Urease accessory protein UreF (237 aa).

The protein belongs to the UreF family. In terms of assembly, ureD, UreF and UreG form a complex that acts as a GTP-hydrolysis-dependent molecular chaperone, activating the urease apoprotein by helping to assemble the nickel containing metallocenter of UreC. The UreE protein probably delivers the nickel.

It is found in the cytoplasm. Its function is as follows. Required for maturation of urease via the functional incorporation of the urease nickel metallocenter. This chain is Urease accessory protein UreF, found in Methylibium petroleiphilum (strain ATCC BAA-1232 / LMG 22953 / PM1).